We begin with the raw amino-acid sequence, 608 residues long: Cilia- and flagella-associated protein 100 (608 aa).

The span at 1–17 (MSETLSNIVSKNMTNDK) shows a compositional bias: polar residues. The tract at residues 1 to 57 (MSETLSNIVSKNMTNDKNSLESMNISSSSSAEENPKKQAKKXKERGPDPSANPFHLS) is disordered. Over residues 20–32 (LESMNISSSSSAE) the composition is skewed to low complexity. 2 coiled-coil regions span residues 164–196 (TLDC…LAKD) and 230–257 (LEIR…QHYK). Disordered stretches follow at residues 291 to 320 (ASKD…AKEG) and 339 to 377 (LSSP…GEEP). Residues 339 to 361 (LSSPQQGSQPSESSGGNSRGSNS) are compositionally biased toward low complexity. 2 coiled-coil regions span residues 385–435 (QQLL…QLKQ) and 500–575 (TVQM…RGRT).

Belongs to the CFAP100 family.

Its subcellular location is the cytoplasm. The protein resides in the cytoskeleton. It is found in the cilium axoneme. In terms of biological role, may play a role in ciliary/flagellar motility by regulating the assembly and the activity of axonemal inner dynein arm. The protein is Cilia- and flagella-associated protein 100 of Macaca fascicularis (Crab-eating macaque).